A 364-amino-acid polypeptide reads, in one-letter code: Alanine racemase (364 aa).

Lys-35 (proton acceptor; specific for D-alanine) is an active-site residue. Lys-35 carries the post-translational modification N6-(pyridoxal phosphate)lysine. Substrate is bound at residue Arg-131. Residue Tyr-256 is the Proton acceptor; specific for L-alanine of the active site. Residue Met-304 coordinates substrate.

This sequence belongs to the alanine racemase family. It depends on pyridoxal 5'-phosphate as a cofactor.

The catalysed reaction is L-alanine = D-alanine. Its pathway is amino-acid biosynthesis; D-alanine biosynthesis; D-alanine from L-alanine: step 1/1. Functionally, catalyzes the interconversion of L-alanine and D-alanine. May also act on other amino acids. The chain is Alanine racemase (alr) from Chromohalobacter salexigens (strain ATCC BAA-138 / DSM 3043 / CIP 106854 / NCIMB 13768 / 1H11).